The chain runs to 345 residues: Phosphoribosylformylglycinamidine cyclo-ligase (345 aa).

It belongs to the AIR synthase family.

It is found in the cytoplasm. It catalyses the reaction 2-formamido-N(1)-(5-O-phospho-beta-D-ribosyl)acetamidine + ATP = 5-amino-1-(5-phospho-beta-D-ribosyl)imidazole + ADP + phosphate + H(+). The protein operates within purine metabolism; IMP biosynthesis via de novo pathway; 5-amino-1-(5-phospho-D-ribosyl)imidazole from N(2)-formyl-N(1)-(5-phospho-D-ribosyl)glycinamide: step 2/2. The polypeptide is Phosphoribosylformylglycinamidine cyclo-ligase (Actinobacillus succinogenes (strain ATCC 55618 / DSM 22257 / CCUG 43843 / 130Z)).